The primary structure comprises 251 residues: Putative F-box protein PP2-B12 (251 aa).

The F-box domain maps to 1-46; the sequence is MNFLDLPEECIATMISFTSPFDACRISAVSKLLRSAADSNTTWERF.

In Arabidopsis thaliana (Mouse-ear cress), this protein is Putative F-box protein PP2-B12 (PP2B12).